We begin with the raw amino-acid sequence, 97 residues long: Cobalt transport protein CbiN (97 aa).

2 helical membrane passes run 6-26 (VLMILGVIILTLAPLIMYSGL) and 68-88 (SLLFALQAAIGALIIGYFFGY).

It belongs to the CbiN family. As to quaternary structure, forms an energy-coupling factor (ECF) transporter complex composed of an ATP-binding protein (A component, CbiO), a transmembrane protein (T component, CbiQ) and 2 possible substrate-capture proteins (S components, CbiM and CbiN) of unknown stoichimetry.

It is found in the cell membrane. It functions in the pathway cofactor biosynthesis; adenosylcobalamin biosynthesis. Functionally, part of the energy-coupling factor (ECF) transporter complex CbiMNOQ involved in cobalt import. This is Cobalt transport protein CbiN from Methanococcus maripaludis (strain C7 / ATCC BAA-1331).